The sequence spans 209 residues: ATP-dependent Clp protease proteolytic subunit (209 aa).

Ser-107 (nucleophile) is an active-site residue. Residue His-132 is part of the active site.

The protein belongs to the peptidase S14 family. As to quaternary structure, fourteen ClpP subunits assemble into 2 heptameric rings which stack back to back to give a disk-like structure with a central cavity, resembling the structure of eukaryotic proteasomes.

It localises to the cytoplasm. The catalysed reaction is Hydrolysis of proteins to small peptides in the presence of ATP and magnesium. alpha-casein is the usual test substrate. In the absence of ATP, only oligopeptides shorter than five residues are hydrolyzed (such as succinyl-Leu-Tyr-|-NHMec, and Leu-Tyr-Leu-|-Tyr-Trp, in which cleavage of the -Tyr-|-Leu- and -Tyr-|-Trp bonds also occurs).. In terms of biological role, cleaves peptides in various proteins in a process that requires ATP hydrolysis. Has a chymotrypsin-like activity. Plays a major role in the degradation of misfolded proteins. The chain is ATP-dependent Clp protease proteolytic subunit from Ruegeria pomeroyi (strain ATCC 700808 / DSM 15171 / DSS-3) (Silicibacter pomeroyi).